The primary structure comprises 158 residues: Xanthine-guanine phosphoribosyltransferase (158 aa).

Residues 38-39 (RG) and 90-98 (DDLVDTGGT) each bind 5-phospho-alpha-D-ribose 1-diphosphate. Aspartate 91 serves as a coordination point for Mg(2+). Guanine-binding residues include aspartate 94 and isoleucine 137. Positions 94 and 137 each coordinate xanthine. GMP contacts are provided by residues 94-98 (DTGGT) and 136-137 (WI).

The protein belongs to the purine/pyrimidine phosphoribosyltransferase family. XGPT subfamily. Homotetramer. Mg(2+) is required as a cofactor.

It is found in the cell inner membrane. The enzyme catalyses GMP + diphosphate = guanine + 5-phospho-alpha-D-ribose 1-diphosphate. It catalyses the reaction XMP + diphosphate = xanthine + 5-phospho-alpha-D-ribose 1-diphosphate. It carries out the reaction IMP + diphosphate = hypoxanthine + 5-phospho-alpha-D-ribose 1-diphosphate. Its pathway is purine metabolism; GMP biosynthesis via salvage pathway; GMP from guanine: step 1/1. It functions in the pathway purine metabolism; XMP biosynthesis via salvage pathway; XMP from xanthine: step 1/1. Its function is as follows. Purine salvage pathway enzyme that catalyzes the transfer of the ribosyl-5-phosphate group from 5-phospho-alpha-D-ribose 1-diphosphate (PRPP) to the N9 position of the 6-oxopurines guanine and xanthine to form the corresponding ribonucleotides GMP (guanosine 5'-monophosphate) and XMP (xanthosine 5'-monophosphate), with the release of PPi. To a lesser extent, also acts on hypoxanthine. This is Xanthine-guanine phosphoribosyltransferase from Buchnera aphidicola subsp. Acyrthosiphon pisum (strain APS) (Acyrthosiphon pisum symbiotic bacterium).